Reading from the N-terminus, the 225-residue chain is pH-response regulator palI/RIM9 homolog 2 (225 aa).

The Cytoplasmic portion of the chain corresponds to 1-4 (MLVK). Residues 5–25 (IVLVVLLTLALVFECFSTISV) traverse the membrane as a helical segment. Over 26–87 (PITIGLYISE…PNHAKYALSN (62 aa)) the chain is Extracellular. A helical membrane pass occupies residues 88–108 (LLLVHVLAFVCVTILWVFGML). At 109–120 (TCFRCIKTSRRM) the chain is on the cytoplasmic side. Residues 121–141 (LIIAVLWSMLTFMVTLLGFLI) traverse the membrane as a helical segment. Over 142–153 (DILIFSSHVTWC) the chain is Extracellular. A helical transmembrane segment spans residues 154 to 174 (TWLTLASAFFTVLSGTVLCVM). Residues 175–225 (RRNLTYDKFLESKPEKHGVYVPLCRLNDVEELEIPWCNTMNHQALTAPTPM) are Cytoplasmic-facing.

This sequence belongs to the palI/RIM9 family.

Its subcellular location is the cell membrane. In terms of biological role, required for the proteolytic cleavage of the transcription factor RIM101 in response to alkaline ambient pH. This chain is pH-response regulator palI/RIM9 homolog 2, found in Kluyveromyces lactis (strain ATCC 8585 / CBS 2359 / DSM 70799 / NBRC 1267 / NRRL Y-1140 / WM37) (Yeast).